The primary structure comprises 108 residues: Resistin (108 aa).

The N-terminal stretch at 1–18 (MKALCLLLLPVLGLLVSS) is a signal peptide. 5 cysteine pairs are disulfide-bonded: Cys-51–Cys-104, Cys-63–Cys-103, Cys-72–Cys-89, Cys-74–Cys-91, and Cys-78–Cys-93.

Belongs to the resistin/FIZZ family. In terms of assembly, homodimer; disulfide-linked. Interacts with DEFA1. Expressed in white adipose tissue (at protein level). Widely expressed, with particularly strong expression in lung, bone marrow, breast and peripheral blood. Expressed strongly in bone marrow and at lower levels in lung, but not detected in other tissues. Isoform 2 is detected in adipose tissue, bone marrow, brain, lung, peripheral blood, placenta and thymus.

It is found in the secreted. Hormone that seems to suppress insulin ability to stimulate glucose uptake into adipose cells. Potentially links obesity to diabetes. Promotes chemotaxis in myeloid cells. This is Resistin (RETN) from Homo sapiens (Human).